The primary structure comprises 118 residues: ATP synthase subunit gamma, chloroplastic (118 aa).

A disulfide bridge links cysteine 30 with cysteine 36.

Belongs to the ATPase gamma chain family. In terms of assembly, F-type ATPases have 2 components, CF(1) - the catalytic core - and CF(0) - the membrane proton channel. CF(1) has five subunits: alpha(3), beta(3), gamma(1), delta(1), epsilon(1). CF(0) has four main subunits: a, b, b' and c.

The protein localises to the plastid. It is found in the chloroplast thylakoid membrane. Produces ATP from ADP in the presence of a proton gradient across the membrane. The gamma chain is believed to be important in regulating ATPase activity and the flow of protons through the CF(0) complex. Its function is as follows. Inceptin is a proteolytic fragment produced by insect larvae that previously ingested the protein. This peptide mediate plant perception of herbivory through the induction of volatile, phenylpropanoid and protease inhibitor defenses such as ethylene, jasmonic acid and salicylic acid for example. The protein is ATP synthase subunit gamma, chloroplastic of Vigna unguiculata (Cowpea).